Consider the following 339-residue polypeptide: Nicotinate-nucleotide--dimethylbenzimidazole phosphoribosyltransferase (339 aa).

Residue Glu306 is the Proton acceptor of the active site.

This sequence belongs to the CobT family.

The enzyme catalyses 5,6-dimethylbenzimidazole + nicotinate beta-D-ribonucleotide = alpha-ribazole 5'-phosphate + nicotinate + H(+). It participates in nucleoside biosynthesis; alpha-ribazole biosynthesis; alpha-ribazole from 5,6-dimethylbenzimidazole: step 1/2. In terms of biological role, catalyzes the synthesis of alpha-ribazole-5'-phosphate from nicotinate mononucleotide (NAMN) and 5,6-dimethylbenzimidazole (DMB). The protein is Nicotinate-nucleotide--dimethylbenzimidazole phosphoribosyltransferase of Brucella anthropi (strain ATCC 49188 / DSM 6882 / CCUG 24695 / JCM 21032 / LMG 3331 / NBRC 15819 / NCTC 12168 / Alc 37) (Ochrobactrum anthropi).